Here is a 98-residue protein sequence, read N- to C-terminus: Small ribosomal subunit protein eS24 (98 aa).

It belongs to the eukaryotic ribosomal protein eS24 family.

In Thermococcus onnurineus (strain NA1), this protein is Small ribosomal subunit protein eS24.